Reading from the N-terminus, the 304-residue chain is Mycothiol acetyltransferase (304 aa).

Glu-36 contributes to the 1D-myo-inositol 2-(L-cysteinylamino)-2-deoxy-alpha-D-glucopyranoside binding site. 73–75 (LFV) provides a ligand contact to acetyl-CoA. An N-acetyltransferase domain is found at 145-304 (LEIQTYTESV…EEHCVWAKSD (160 aa)). The 1D-myo-inositol 2-(L-cysteinylamino)-2-deoxy-alpha-D-glucopyranoside site is built by Glu-179, Lys-225, and Glu-236. 240 to 242 (VGL) provides a ligand contact to acetyl-CoA. Tyr-274 lines the 1D-myo-inositol 2-(L-cysteinylamino)-2-deoxy-alpha-D-glucopyranoside pocket. Residue 279–284 (NDPAVK) participates in acetyl-CoA binding.

The protein belongs to the acetyltransferase family. MshD subfamily. Monomer.

The catalysed reaction is 1D-myo-inositol 2-(L-cysteinylamino)-2-deoxy-alpha-D-glucopyranoside + acetyl-CoA = mycothiol + CoA + H(+). Catalyzes the transfer of acetyl from acetyl-CoA to desacetylmycothiol (Cys-GlcN-Ins) to form mycothiol. The protein is Mycothiol acetyltransferase of Corynebacterium aurimucosum (strain ATCC 700975 / DSM 44827 / CIP 107346 / CN-1) (Corynebacterium nigricans).